A 409-amino-acid chain; its full sequence is Sharpin (409 aa).

Positions 1-178 are self-association; it reads MAPPAGGTAA…EKEELAGRLT (178 aa). Positions 121–164 are disordered; sequence EGQNGSDSLPPALGPETRPVSPPSPLEVPTPKAPKPKVDLPWSP. The span at 140–153 shows a compositional bias: pro residues; sequence VSPPSPLEVPTPKA. A Phosphoserine modification is found at serine 163. The interaction with SHANK1 stretch occupies residues 173 to 300; that stretch reads LAGRLTRAVE…LLSAPREAPG (128 aa). The region spanning 217 to 280 is the Ubiquitin-like domain; sequence IRLQVTVEDA…PEHSLAFYGV (64 aa). Serine 302 is modified (phosphoserine). Residues 315–337 are disordered; sequence RLFPQSLGLPPTPQPTSSSLPSP. Over residues 318-336 the composition is skewed to low complexity; that stretch reads PQSLGLPPTPQPTSSSLPS. The segment at 338 to 367 adopts a RanBP2-type zinc-finger fold; it reads LQPGWPCPSCTFINAPSRPGCEMCSTQRPC. A disordered region spans residues 384–409; sequence TRREDGPSLPGPRSLDPLLNLSGNLC.

Monomer and homodimer. Component of the LUBAC complex (linear ubiquitin chain assembly complex) which consists of SHARPIN, RBCK1 and RNF31. LUBAC has a MW of approximately 600 kDa suggesting a heteromultimeric assembly of its subunits. Associates with the TNF-R1 signaling complex (TNF-RSC) in a stimulation-dependent manner. Interacts with EYA1, EYA2, SHANK1 and SHANK3 (via ANK repeats).

It is found in the cytoplasm. Its subcellular location is the cytosol. It localises to the synapse. The protein operates within protein modification; protein ubiquitination. Functionally, component of the LUBAC complex which conjugates linear polyubiquitin chains in a head-to-tail manner to substrates and plays a key role in NF-kappa-B activation and regulation of inflammation. LUBAC conjugates linear polyubiquitin to IKBKG and RIPK1 and is involved in activation of the canonical NF-kappa-B and the JNK signaling pathways. Linear ubiquitination mediated by the LUBAC complex interferes with TNF-induced cell death and thereby prevents inflammation. LUBAC is recruited to the TNF-R1 signaling complex (TNF-RSC) following polyubiquitination of TNF-RSC components by BIRC2 and/or BIRC3 and to conjugate linear polyubiquitin to IKBKG and possibly other components contributing to the stability of the complex. The LUBAC complex is also involved in innate immunity by conjugating linear polyubiquitin chains at the surface of bacteria invading the cytosol to form the ubiquitin coat surrounding bacteria. LUBAC is not able to initiate formation of the bacterial ubiquitin coat, and can only promote formation of linear polyubiquitins on pre-existing ubiquitin. The bacterial ubiquitin coat acts as an 'eat-me' signal for xenophagy and promotes NF-kappa-B activation. Together with OTULIN, the LUBAC complex regulates the canonical Wnt signaling during angiogenesis. The polypeptide is Sharpin (SHARPIN) (Bos taurus (Bovine)).